A 441-amino-acid chain; its full sequence is MRPLIAIVGRPNVGKSTLFNRIVGRRKAMVDDMPGVTRDRNYANVDRFDVPFILIDTGGFEPETNDRLLQQMREQSQLAMAEADVILFVMDGRDGLTPADVEVVEMLRRVDKPIFYLINKIDGDKQETAIGDFYTLGVDTIFTVSAEHNRGVNDLMDEVIKALPKGSAADTDEEVTKIAVIGRPNVGKSTLVNRLLGIERVVANPTPGTTRDSIDTYFTCNRKRYLLIDTAGIRRKGKTTEKIEKYSVVDSLRSIERADVVLIVIDAEEGVTEQDTKIAGYAYEAGRGCIFVVNKWDTLTKDNASMGKFIEKIRMEFKYLPFAPIVFVSAKTGQRLGKIMTEVDAVMEQFARRITTSDLNRVFSTATEEHHAPLYQGRRVKFYFATQVGTKPPSIVIFTNRPDGVHFSYERYIVNRFREAFGFTGTPMRLLFKGRESRKRA.

2 consecutive EngA-type G domains span residues 3-167 (PLIA…PKGS) and 176-351 (TKIA…EQFA). Residues 9-16 (GRPNVGKS), 56-60 (DTGGF), 119-122 (NKID), 182-189 (GRPNVGKS), 229-233 (DTAGI), and 294-297 (NKWD) each bind GTP. Positions 352–436 (RRITTSDLNR…PMRLLFKGRE (85 aa)) constitute a KH-like domain.

Belongs to the TRAFAC class TrmE-Era-EngA-EngB-Septin-like GTPase superfamily. EngA (Der) GTPase family. As to quaternary structure, associates with the 50S ribosomal subunit.

Functionally, GTPase that plays an essential role in the late steps of ribosome biogenesis. In Geotalea uraniireducens (strain Rf4) (Geobacter uraniireducens), this protein is GTPase Der.